Consider the following 824-residue polypeptide: AMP deaminase 2 (824 aa).

A disordered region spans residues 1 to 43; that stretch reads MASYPGPGKSKAKYPFKKRASLQASAAAPEARSGLGASPLQSA. The segment covering 10–20 has biased composition (basic residues); it reads SKAKYPFKKRA. S21 is subject to Phosphoserine. Low complexity predominate over residues 21–33; sequence SLQASAAAPEARS. R44 is subject to Omega-N-methylarginine. Phosphoserine is present on residues S45, S63, and S79. Y90 bears the Phosphotyrosine mark. 2 positions are modified to phosphoserine: S96 and S113. At T133 the chain carries Phosphothreonine. Phosphoserine occurs at positions 135 and 137. Positions 364 and 366 each coordinate Zn(2+). Residues H366 and 435–440 each bind substrate; that span reads KFNAKY. Zn(2+) is bound at residue H633. E636 provides a ligand contact to substrate. H655 (proton acceptor) is an active-site residue. D710 serves as a coordination point for Zn(2+). Substrate is bound at residue 711-714; the sequence is DPLQ.

This sequence belongs to the metallo-dependent hydrolases superfamily. Adenosine and AMP deaminases family. As to quaternary structure, homotetramer. The cofactor is Zn(2+).

The enzyme catalyses AMP + H2O + H(+) = IMP + NH4(+). The protein operates within purine metabolism; IMP biosynthesis via salvage pathway; IMP from AMP: step 1/1. In terms of biological role, AMP deaminase plays a critical role in energy metabolism. Catalyzes the deamination of AMP to IMP and plays an important role in the purine nucleotide cycle. The protein is AMP deaminase 2 of Rattus norvegicus (Rat).